A 474-amino-acid polypeptide reads, in one-letter code: Trehalose-6-phosphate synthase (474 aa).

Position 10 (arginine 10) interacts with D-glucose 6-phosphate. Residue 22-23 (GG) coordinates UDP-alpha-D-glucose. Tyrosine 77 and aspartate 131 together coordinate D-glucose 6-phosphate. Positions 263 and 268 each coordinate UDP-alpha-D-glucose. Arginine 301 lines the D-glucose 6-phosphate pocket. Residues phenylalanine 340 and 366 to 370 (LVAKE) contribute to the UDP-alpha-D-glucose site.

The protein belongs to the glycosyltransferase 20 family. As to quaternary structure, homotetramer.

The catalysed reaction is D-glucose 6-phosphate + UDP-alpha-D-glucose = alpha,alpha-trehalose 6-phosphate + UDP + H(+). The protein operates within glycan biosynthesis; trehalose biosynthesis. Probably involved in the osmoprotection via the biosynthesis of trehalose. Catalyzes the transfer of glucose from UDP-alpha-D-glucose (UDP-Glc) to D-glucose 6-phosphate (Glc-6-P) to form trehalose-6-phosphate. Acts with retention of the anomeric configuration of the UDP-sugar donor. The sequence is that of Trehalose-6-phosphate synthase from Escherichia coli O157:H7.